Here is a 349-residue protein sequence, read N- to C-terminus: Protein RecA (349 aa).

64–71 contributes to the ATP binding site; that stretch reads GPESSGKT. The disordered stretch occupies residues 328 to 349; it reads NGEIEVEAPSEEEFEDLPLDLK. Acidic residues predominate over residues 331 to 349; it reads IEVEAPSEEEFEDLPLDLK.

This sequence belongs to the RecA family.

It localises to the cytoplasm. Its function is as follows. Can catalyze the hydrolysis of ATP in the presence of single-stranded DNA, the ATP-dependent uptake of single-stranded DNA by duplex DNA, and the ATP-dependent hybridization of homologous single-stranded DNAs. It interacts with LexA causing its activation and leading to its autocatalytic cleavage. In Halalkalibacterium halodurans (strain ATCC BAA-125 / DSM 18197 / FERM 7344 / JCM 9153 / C-125) (Bacillus halodurans), this protein is Protein RecA.